Reading from the N-terminus, the 88-residue chain is Molybdopterin synthase sulfur carrier subunit (88 aa).

Residue Gly-88 is modified to 1-thioglycine; alternate. Gly-88 bears the Glycyl adenylate; alternate mark.

This sequence belongs to the MoaD family. MOCS2A subfamily. In terms of assembly, heterotetramer; composed of 2 small (MOCS2A) and 2 large (MOCS2B) subunits. C-terminal thiocarboxylation occurs in 2 steps, it is first acyl-adenylated (-COAMP) via the hesA/moeB/thiF part of uba4, then thiocarboxylated (-COSH) via the rhodanese domain of uba4.

It localises to the cytoplasm. It participates in cofactor biosynthesis; molybdopterin biosynthesis. Acts as a sulfur carrier required for molybdopterin biosynthesis. Component of the molybdopterin synthase complex that catalyzes the conversion of precursor Z into molybdopterin by mediating the incorporation of 2 sulfur atoms into precursor Z to generate a dithiolene group. In the complex, serves as sulfur donor by being thiocarboxylated (-COSH) at its C-terminus by uba4. After interaction with MOCS2B, the sulfur is then transferred to precursor Z to form molybdopterin. The polypeptide is Molybdopterin synthase sulfur carrier subunit (Aspergillus niger (strain ATCC MYA-4892 / CBS 513.88 / FGSC A1513)).